Reading from the N-terminus, the 430-residue chain is Tol-Pal system protein TolB (430 aa).

The N-terminal stretch at 1-26 (MSLMTKLGLRTLVASCLIAVGGAANA) is a signal peptide.

The protein belongs to the TolB family. In terms of assembly, the Tol-Pal system is composed of five core proteins: the inner membrane proteins TolA, TolQ and TolR, the periplasmic protein TolB and the outer membrane protein Pal. They form a network linking the inner and outer membranes and the peptidoglycan layer.

Its subcellular location is the periplasm. In terms of biological role, part of the Tol-Pal system, which plays a role in outer membrane invagination during cell division and is important for maintaining outer membrane integrity. In Paraburkholderia xenovorans (strain LB400), this protein is Tol-Pal system protein TolB.